A 163-amino-acid polypeptide reads, in one-letter code: Fatty acid-binding protein homolog (163 aa).

A signal peptide spans 1–23 (MRCLVALILTVLIVTPEVEAKTL).

The protein belongs to the calycin superfamily. Fatty-acid binding protein (FABP) family. As to expression, abundant in the fluid surrounding the developing embryo of Ascaris suum.

May play a role in sequestering potentially toxic fatty acids and their peroxidation products, or it may be involved in the maintenance of the impermeable lipid layer of the eggshell. The polypeptide is Fatty acid-binding protein homolog (Ascaris suum (Pig roundworm)).